Consider the following 179-residue polypeptide: MSTGSLSDVEDFQEVEMLECDGIKLDPNKEFGISNDSNEESSTCDNGSPKKGRGTSGKRRKAPSKKSPLGNINQEGKQVQRNAANARERARMRVLSKAFSRLKTTLPWVPPDTKLSKLDTLRLASSYIAHLRQILANDKYENGYIHPVNLTWPFMVAGKPENDLKEVVSTSRLCGPTAS.

The disordered stretch occupies residues 23-87; the sequence is IKLDPNKEFG…QVQRNAANAR (65 aa). Positions 34–46 are enriched in polar residues; that stretch reads SNDSNEESSTCDN. Over residues 50–64 the composition is skewed to basic residues; it reads KKGRGTSGKRRKAPS. Positions 70 to 80 are enriched in polar residues; it reads GNINQEGKQVQ. Residues 79–131 enclose the bHLH domain; it reads VQRNAANARERARMRVLSKAFSRLKTTLPWVPPDTKLSKLDTLRLASSYIAHL.

As to quaternary structure, efficient DNA binding requires dimerization with another bHLH protein.

It is found in the nucleus. Functionally, involved in epithelial-mesenchymal interactions in kidney and lung morphogenesis that include epithelial differentiation and branching morphogenesis. The chain is Transcription factor 21 (tcf21) from Xenopus tropicalis (Western clawed frog).